A 678-amino-acid chain; its full sequence is GAS2-like protein 1 (678 aa).

At Ala2 the chain carries N-acetylalanine. The 122-residue stretch at 27 to 148 (EAMKEDLADW…CLLEVARRGA (122 aa)) folds into the Calponin-homology (CH) domain. The 73-residue stretch at 203–275 (NDLRNLDELV…HYLDKHDPCR (73 aa)) folds into the GAR domain. Positions 276–291 (CSSSTHRLPQQRTGTF) are enriched in polar residues. Disordered regions lie at residues 276 to 524 (CSSS…FRRL) and 538 to 678 (AASH…DSSM). A phosphoserine mark is found at Ser306 and Ser316. The segment covering 327 to 340 (GTKEGPETPLRPRD) has biased composition (basic and acidic residues). Phosphothreonine is present on Thr334. Ser352 and Ser355 each carry phosphoserine. The span at 354-365 (DSDSSASSAQSG) shows a compositional bias: low complexity. The span at 370–381 (RSDDSATGSRRE) shows a compositional bias: basic and acidic residues. A compositionally biased stretch (low complexity) spans 392–403 (PASPRRPTAPRS). Ser394 is subject to Phosphoserine. A compositionally biased stretch (basic and acidic residues) spans 404–413 (QSRDRLDRGR). Phosphoserine is present on residues Ser436 and Ser438. Residues 437–454 (QSREEQAVLMVRRDRDGQ) are compositionally biased toward basic and acidic residues. Over residues 461-471 (GRGGGGSGGSG) the composition is skewed to gly residues. 2 positions are modified to phosphoserine: Ser482 and Ser489. A compositionally biased stretch (pro residues) spans 485-495 (APRPSRGPSPG). The residue at position 490 (Arg490) is an Omega-N-methylarginine. The residue at position 493 (Ser493) is a Phosphoserine. Thr501 carries the post-translational modification Phosphothreonine. Residue Arg507 is modified to Omega-N-methylarginine. Low complexity-rich tracts occupy residues 509–519 (PLQLDPQQEQQ) and 554–568 (DSAYCSSSSSSSSLS). Arg630 is modified (omega-N-methylarginine). Residues 631–641 (GRMDTQPDRKP) show a composition bias toward basic and acidic residues. Residue Ser654 is modified to Phosphoserine. Residues 666–678 (HSVTPRTEPDSSM) are compositionally biased toward polar residues.

It belongs to the GAS2 family. In terms of assembly, interacts with MAPRE1.

The protein resides in the cytoplasm. The protein localises to the cytoskeleton. Its subcellular location is the stress fiber. Seems to be involved in the cross-linking of microtubules and microfilaments. Regulates microtubule dynamics and stability by interacting with microtubule plus-end tracking proteins, such as MAPRE1, to regulate microtubule growth along actin stress fibers. This chain is GAS2-like protein 1 (Gas2l1), found in Mus musculus (Mouse).